Reading from the N-terminus, the 351-residue chain is UDP-N-acetylglucosamine--N-acetylmuramyl-(pentapeptide) pyrophosphoryl-undecaprenol N-acetylglucosamine transferase (351 aa).

Residues 12-14 (TGG), N124, R160, S188, I239, 258-263 (ALTVCE), and Q283 each bind UDP-N-acetyl-alpha-D-glucosamine.

Belongs to the glycosyltransferase 28 family. MurG subfamily.

Its subcellular location is the cell inner membrane. The catalysed reaction is di-trans,octa-cis-undecaprenyl diphospho-N-acetyl-alpha-D-muramoyl-L-alanyl-D-glutamyl-meso-2,6-diaminopimeloyl-D-alanyl-D-alanine + UDP-N-acetyl-alpha-D-glucosamine = di-trans,octa-cis-undecaprenyl diphospho-[N-acetyl-alpha-D-glucosaminyl-(1-&gt;4)]-N-acetyl-alpha-D-muramoyl-L-alanyl-D-glutamyl-meso-2,6-diaminopimeloyl-D-alanyl-D-alanine + UDP + H(+). The protein operates within cell wall biogenesis; peptidoglycan biosynthesis. Its function is as follows. Cell wall formation. Catalyzes the transfer of a GlcNAc subunit on undecaprenyl-pyrophosphoryl-MurNAc-pentapeptide (lipid intermediate I) to form undecaprenyl-pyrophosphoryl-MurNAc-(pentapeptide)GlcNAc (lipid intermediate II). The protein is UDP-N-acetylglucosamine--N-acetylmuramyl-(pentapeptide) pyrophosphoryl-undecaprenol N-acetylglucosamine transferase of Glaesserella parasuis serovar 5 (strain SH0165) (Haemophilus parasuis).